A 411-amino-acid chain; its full sequence is MDFNELKNTDKDIYGIIEEEWERQKNGIELIASENFTSKSVMEAMGSFLTNKYAEGYPGKRYYGGCYIVDKAEDLARDRMKKLFNAEHVNVQPHSGSQANMAVYMSVLKPGDTVLGMSLNHGGHLTHGSKVSFSGKLYNFVSYGLNSDTEIIDYDEMRELALKHKPKMIVSGASAYPRKIDFKKIREICDEVGAYMMVDMAHIAGIIAAGRHESPVPYADFVTTTTHKTLRGPRGGAIICKEKYGAALDKTIFPGIQGGPLMHIIAAKAVCFGEALKDEYKEYIDQIIKNAKVFGEELVKYGFRLVSGGTDNHLLLVDLTNKNITGKDLEELLDKVNITVNKNAIPFDKLKPNVTSGIRVGTPAVTTRGFKEEEMKKVAYFINKAVENREGDLSAIKREVIELCEAFPLYE.

(6S)-5,6,7,8-tetrahydrofolate contacts are provided by residues leucine 119 and 123 to 125 (GHL). Lysine 228 bears the N6-(pyridoxal phosphate)lysine mark.

This sequence belongs to the SHMT family. As to quaternary structure, homodimer. Requires pyridoxal 5'-phosphate as cofactor.

It is found in the cytoplasm. It carries out the reaction (6R)-5,10-methylene-5,6,7,8-tetrahydrofolate + glycine + H2O = (6S)-5,6,7,8-tetrahydrofolate + L-serine. It participates in one-carbon metabolism; tetrahydrofolate interconversion. Its pathway is amino-acid biosynthesis; glycine biosynthesis; glycine from L-serine: step 1/1. Its function is as follows. Catalyzes the reversible interconversion of serine and glycine with tetrahydrofolate (THF) serving as the one-carbon carrier. This reaction serves as the major source of one-carbon groups required for the biosynthesis of purines, thymidylate, methionine, and other important biomolecules. Also exhibits THF-independent aldolase activity toward beta-hydroxyamino acids, producing glycine and aldehydes, via a retro-aldol mechanism. The chain is Serine hydroxymethyltransferase from Clostridium kluyveri (strain NBRC 12016).